The following is a 188-amino-acid chain: F7-2 fimbrial protein (188 aa).

The signal sequence occupies residues 1–21; the sequence is MIKSVIAGAVAMAVVSFGAYA. Cysteines 43 and 82 form a disulfide.

The protein belongs to the fimbrial protein family.

The protein resides in the fimbrium. In terms of biological role, fimbriae (also called pili), polar filaments radiating from the surface of the bacterium to a length of 0.5-1.5 micrometers and numbering 100-300 per cell, enable bacteria to colonize the epithelium of specific host organs. This Escherichia coli O6:H1 (strain CFT073 / ATCC 700928 / UPEC) protein is F7-2 fimbrial protein (F7-2).